Consider the following 319-residue polypeptide: Olfactory receptor 56B4 (319 aa).

Residues 1 to 31 are Extracellular-facing; that stretch reads MDTSTSVTYDSSLQISQFILMGLPGIHEWQH. The chain crosses the membrane as a helical span at residues 32-52; the sequence is WLSLPLTLLYLLALGANLLII. The Cytoplasmic segment spans residues 53-60; that stretch reads ITIQHETV. A helical transmembrane segment spans residues 61 to 81; sequence LHEPMYHLLGILAVVDIGLAT. Over 82-105 the chain is Extracellular; it reads TIMPKILAIFWFDAKAISLPMCFA. Cysteines 103 and 195 form a disulfide. Residues 106-126 traverse the membrane as a helical segment; sequence QIYAIHCFFCIESGIFLCMAV. The Cytoplasmic portion of the chain corresponds to 127 to 145; it reads DRYIAICRPLQYPSIVTKA. The helical transmembrane segment at 146-166 threads the bilayer; it reads FVFKATGFIMLRNGLLTIPVP. Over 167–202 the chain is Extracellular; sequence ILAAQRHYCSRNEIEHCLCSNLGVISLACDDITVNK. Residues 203-223 form a helical membrane-spanning segment; sequence FYQLMLAWVLVGSDMALVFSS. The Cytoplasmic segment spans residues 224 to 243; that stretch reads YAVILHSVLRLNSAEAMSKA. Residues 244–263 form a helical membrane-spanning segment; sequence LSTCSSHLILILFHTGIIVL. Over 264–277 the chain is Extracellular; sequence SVTHLAEKKIPLIP. Residues 278-298 traverse the membrane as a helical segment; sequence VFLNVLHNVIPPALNPLACAL. Topologically, residues 299–319 are cytoplasmic; the sequence is RMHKLRLGFQRLLGLGQDVSK.

It belongs to the G-protein coupled receptor 1 family.

The protein localises to the cell membrane. Its function is as follows. Odorant receptor. In Homo sapiens (Human), this protein is Olfactory receptor 56B4 (OR56B4).